Consider the following 405-residue polypeptide: MLAIATLHVALQVFGAFSLSHAAAVTLEHRSAGNSNIAAIPAKWDVYGYLFNVTVGSPPQNITMLSDMTWMAPFVRSGRCLSQFNPELCVAQGQSFFNEHDSTTFGNTTFAQATWPVTAFAPNFTVDYGRDKFCIGNICNKDILMQVSDFPYPGSVVPVIPFGGIFGLAPTPKTITETSEPVNFQAWKNGNMGPLVGWHTCEVLKSAASCQGGDAQLVFGGTDTTMYSAKKIQSYEIQNPEWLSDAFYPSTPPRSNYWTVVDEGSEGLGAPLSLNGYKYLVRHIKSAKLASKAIVQNIQQQGSSGYNTANQDWYTVSCDGLDEFPNLVYQLDGRKKYTISPGDYVTKLTDMPGSVCYLNVNVWKYGRTENGDARVVLLGKAFLKRKYLVLNFEERSFGLAPLLTG.

Residues 1–24 form the signal peptide; the sequence is MLAIATLHVALQVFGAFSLSHAAA. The Peptidase A1 domain occupies 49-400; it reads YLFNVTVGSP…NFEERSFGLA (352 aa). Asparagine 52, asparagine 61, asparagine 107, and asparagine 123 each carry an N-linked (GlcNAc...) asparagine glycan. Cysteine 318 and cysteine 356 are oxidised to a cystine.

The protein belongs to the peptidase A1 family.

Its subcellular location is the secreted. Its function is as follows. Secreted aspartic protease; part of the gene cluster that mediates the biosynthesis of the mycotoxin fusarin C. Within the cluster, FUS1, FUS2, FUS8 and FUS9 are sufficient for fusarin production. The other FUS cluster members are not essential for fusarin C biosynthesis. This chain is Secreted aspartic protease FUS4, found in Gibberella fujikuroi (strain CBS 195.34 / IMI 58289 / NRRL A-6831) (Bakanae and foot rot disease fungus).